Consider the following 502-residue polypeptide: Cardiolipin synthase (502 aa).

A run of 3 helical transmembrane segments spans residues V7–G27, L29–S49, and I59–F79. PLD phosphodiesterase domains are found at residues I237–Y264 and E415–S442. Active-site residues include H242, K244, D249, H420, K422, and D427.

It belongs to the phospholipase D family. Cardiolipin synthase subfamily.

It localises to the cell membrane. The enzyme catalyses 2 a 1,2-diacyl-sn-glycero-3-phospho-(1'-sn-glycerol) = a cardiolipin + glycerol. Functionally, catalyzes the reversible phosphatidyl group transfer from one phosphatidylglycerol molecule to another to form cardiolipin (CL) (diphosphatidylglycerol) and glycerol. The sequence is that of Cardiolipin synthase (cls) from Geobacillus thermodenitrificans (strain NG80-2).